Here is a 219-residue protein sequence, read N- to C-terminus: MDAVLKSLSVRLPDAADKRSDTGRPERVTERPTRQEAEAAVRTLIRWAGDDPEREGLRETPQRVARAYEQIFGGYRQEPTHILDRVFEEVEGYGDIVLVRDIPFHSHCEHHMVPFIGRAHIAYYPRRGVVGLSKLARVVDAFARRLQTQETMTAQIADTIDAVLNPRGVAVMVEAEHLCMAMRGVQKAGVSTLTTQFTGVFKQDPHEQVRFLTLVRDQR.

Residues 1–37 form a disordered region; it reads MDAVLKSLSVRLPDAADKRSDTGRPERVTERPTRQEA. Residues 14 to 37 are compositionally biased toward basic and acidic residues; it reads DAADKRSDTGRPERVTERPTRQEA. Residues Cys-108, His-111, and Cys-179 each coordinate Zn(2+).

This sequence belongs to the GTP cyclohydrolase I family. In terms of assembly, homomer.

It carries out the reaction GTP + H2O = 7,8-dihydroneopterin 3'-triphosphate + formate + H(+). The protein operates within cofactor biosynthesis; 7,8-dihydroneopterin triphosphate biosynthesis; 7,8-dihydroneopterin triphosphate from GTP: step 1/1. The chain is GTP cyclohydrolase 1 from Methylobacterium sp. (strain 4-46).